The following is a 619-amino-acid chain: Threonine--tRNA ligase (619 aa).

Residues 1-143 are editing domain; that stretch reads MQLLLIHSDF…SRSIRIGEGE (143 aa). A catalytic region spans residues 201 to 500; the sequence is PHVELMRRLE…AANGGLPMLP (300 aa). Zn(2+)-binding residues include C293, H345, and H469.

Belongs to the class-II aminoacyl-tRNA synthetase family. Homodimer. The cofactor is Zn(2+).

Its subcellular location is the cytoplasm. It carries out the reaction tRNA(Thr) + L-threonine + ATP = L-threonyl-tRNA(Thr) + AMP + diphosphate + H(+). Functionally, catalyzes the attachment of threonine to tRNA(Thr) in a two-step reaction: L-threonine is first activated by ATP to form Thr-AMP and then transferred to the acceptor end of tRNA(Thr). Also edits incorrectly charged L-seryl-tRNA(Thr). In Methanothrix thermoacetophila (strain DSM 6194 / JCM 14653 / NBRC 101360 / PT) (Methanosaeta thermophila), this protein is Threonine--tRNA ligase.